The sequence spans 226 residues: Leucyl/phenylalanyl-tRNA--protein transferase (226 aa).

The protein belongs to the L/F-transferase family.

The protein resides in the cytoplasm. It carries out the reaction N-terminal L-lysyl-[protein] + L-leucyl-tRNA(Leu) = N-terminal L-leucyl-L-lysyl-[protein] + tRNA(Leu) + H(+). It catalyses the reaction N-terminal L-arginyl-[protein] + L-leucyl-tRNA(Leu) = N-terminal L-leucyl-L-arginyl-[protein] + tRNA(Leu) + H(+). The enzyme catalyses L-phenylalanyl-tRNA(Phe) + an N-terminal L-alpha-aminoacyl-[protein] = an N-terminal L-phenylalanyl-L-alpha-aminoacyl-[protein] + tRNA(Phe). Functions in the N-end rule pathway of protein degradation where it conjugates Leu, Phe and, less efficiently, Met from aminoacyl-tRNAs to the N-termini of proteins containing an N-terminal arginine or lysine. This is Leucyl/phenylalanyl-tRNA--protein transferase from Pseudomonas putida (strain W619).